Reading from the N-terminus, the 724-residue chain is 1,4-alpha-glucan branching enzyme GlgB 1 (724 aa).

The active-site Nucleophile is D403. E456 (proton donor) is an active-site residue.

The protein belongs to the glycosyl hydrolase 13 family. GlgB subfamily. In terms of assembly, monomer.

The catalysed reaction is Transfers a segment of a (1-&gt;4)-alpha-D-glucan chain to a primary hydroxy group in a similar glucan chain.. Its pathway is glycan biosynthesis; glycogen biosynthesis. Its function is as follows. Catalyzes the formation of the alpha-1,6-glucosidic linkages in glycogen by scission of a 1,4-alpha-linked oligosaccharide from growing alpha-1,4-glucan chains and the subsequent attachment of the oligosaccharide to the alpha-1,6 position. This is 1,4-alpha-glucan branching enzyme GlgB 1 from Xanthomonas campestris pv. campestris (strain 8004).